The chain runs to 499 residues: Maturase K (499 aa).

Belongs to the intron maturase 2 family. MatK subfamily.

Its subcellular location is the plastid. It is found in the chloroplast. Its function is as follows. Usually encoded in the trnK tRNA gene intron. Probably assists in splicing its own and other chloroplast group II introns. The sequence is that of Maturase K from Macrozamia communis (Burrawang palm).